The sequence spans 196 residues: Small ribosomal subunit protein uS4c (196 aa).

The disordered stretch occupies residues 20–39; sequence GLTRKTPKSGSNLKKKFHSG. Positions 89 to 152 constitute an S4 RNA-binding domain; sequence MRLDNILFRL…RSKCLVQNSI (64 aa).

This sequence belongs to the universal ribosomal protein uS4 family. In terms of assembly, part of the 30S ribosomal subunit. Contacts protein S5. The interaction surface between S4 and S5 is involved in control of translational fidelity.

Its subcellular location is the plastid. It is found in the chloroplast. Functionally, one of the primary rRNA binding proteins, it binds directly to 16S rRNA where it nucleates assembly of the body of the 30S subunit. Its function is as follows. With S5 and S12 plays an important role in translational accuracy. This chain is Small ribosomal subunit protein uS4c (rps4), found in Dendrocalamus giganteus (Giant bamboo).